The sequence spans 582 residues: ATP-dependent lipid A-core flippase (582 aa).

5 consecutive transmembrane segments (helical) span residues 16 to 36 (LWPT…ALIL), 63 to 83 (VLVW…ITSY), 153 to 173 (IIGL…ILIV), 253 to 273 (PIIQ…ASFP), and 275 to 295 (VMDN…IALM). An ABC transmembrane type-1 domain is found at 28–310 (IVAGVALILN…LTNVNAQFQR (283 aa)). Residues 342-578 (VEFRNVTFTY…RGVYAQLHKM (237 aa)) enclose the ABC transporter domain. 376 to 383 (GRSGSGKS) lines the ATP pocket.

It belongs to the ABC transporter superfamily. Lipid exporter (TC 3.A.1.106) family. As to quaternary structure, homodimer.

The protein localises to the cell inner membrane. It catalyses the reaction ATP + H2O + lipid A-core oligosaccharideSide 1 = ADP + phosphate + lipid A-core oligosaccharideSide 2.. Involved in lipopolysaccharide (LPS) biosynthesis. Translocates lipid A-core from the inner to the outer leaflet of the inner membrane. Transmembrane domains (TMD) form a pore in the inner membrane and the ATP-binding domain (NBD) is responsible for energy generation. In Shigella flexneri, this protein is ATP-dependent lipid A-core flippase.